Consider the following 308-residue polypeptide: MARAMDNAILETILQRVRPLIGQGKVADYIPALASVEGSKLGIAICTVDGQHYQAGDAHERFSIQSISKVLSLVVAMRHYPEEEIWQRVGKDPSGSPFNSLVQLEMEQGIPRNPFINAGALVVCDMLQGRLSAPRQRMLEVVRALCGVSDITYDATVARSEFEHSARNAAIAWLMKSFGNFHHDVPTVLQNYFHYCALKMSCMELARTFVFLANQGEAFHLDEPVVTPMQARQINALMATNGMYQNAGEFAWRVGLPAKSGVGGGIVAIVPHEMAIAVWSPELDPAGNSLAGIAALEQLTQTLGRSVY.

Substrate-binding residues include serine 66, asparagine 117, glutamate 161, asparagine 168, tyrosine 192, tyrosine 244, and valine 262.

It belongs to the glutaminase family. In terms of assembly, homotetramer.

It carries out the reaction L-glutamine + H2O = L-glutamate + NH4(+). The chain is Glutaminase from Salmonella arizonae (strain ATCC BAA-731 / CDC346-86 / RSK2980).